Here is a 453-residue protein sequence, read N- to C-terminus: Serine/threonine-protein phosphatase 2A regulatory subunit B'' subunit gamma (453 aa).

EF-hand domains follow at residues 273-308 and 341-376; these read PSALRVYGQYLNLDKDHNGMLSKEELSRYGTATMTN and KEPAALQYIFKLLDIENKGYLNVFSLNYFFRAIQEL. Ca(2+) contacts are provided by Asp286, Asp288, Asn290, Met292, and Glu297.

As to quaternary structure, interacts with MCM3AP/GANP. Interacts with PPP5C, and the phosphatase 2A core enzyme composed of the PPP2CA catalytic subunit and the constant regulatory subunit PPP2R1A. Finds in a complex with ABCB1, TFPI2 and PPP2R3C; leading to the dephosphorylation of ABCB1. As to expression, ubiquitously expressed in brain and other tissues.

It localises to the nucleus. The protein localises to the cytoplasm. Its function is as follows. May regulate MCM3AP phosphorylation through phosphatase recruitment. May act as a negative regulator of ABCB1 expression and function through the dephosphorylation of ABCB1 by TFPI2/PPP2R3C complex. May play a role in the activation-induced cell death of B-cells. This chain is Serine/threonine-protein phosphatase 2A regulatory subunit B'' subunit gamma (PPP2R3C), found in Homo sapiens (Human).